The sequence spans 198 residues: Peptidyl-tRNA hydrolase (198 aa).

Y17 is a binding site for tRNA. The active-site Proton acceptor is H22. TRNA contacts are provided by Y74, N76, and N122.

This sequence belongs to the PTH family. As to quaternary structure, monomer.

Its subcellular location is the cytoplasm. The catalysed reaction is an N-acyl-L-alpha-aminoacyl-tRNA + H2O = an N-acyl-L-amino acid + a tRNA + H(+). Functionally, hydrolyzes ribosome-free peptidyl-tRNAs (with 1 or more amino acids incorporated), which drop off the ribosome during protein synthesis, or as a result of ribosome stalling. In terms of biological role, catalyzes the release of premature peptidyl moieties from peptidyl-tRNA molecules trapped in stalled 50S ribosomal subunits, and thus maintains levels of free tRNAs and 50S ribosomes. The protein is Peptidyl-tRNA hydrolase of Kineococcus radiotolerans (strain ATCC BAA-149 / DSM 14245 / SRS30216).